A 463-amino-acid polypeptide reads, in one-letter code: Fumarate hydratase class II (463 aa).

Residues Ser97 to Thr99, His128 to Asp131, Ser138 to Asn140, and Thr186 each bind substrate. The active-site Proton donor/acceptor is His187. Residue Ser317 is part of the active site. Substrate is bound by residues Ser318 and Lys323–Asn325.

This sequence belongs to the class-II fumarase/aspartase family. Fumarase subfamily. As to quaternary structure, homotetramer.

Its subcellular location is the cytoplasm. It catalyses the reaction (S)-malate = fumarate + H2O. It functions in the pathway carbohydrate metabolism; tricarboxylic acid cycle; (S)-malate from fumarate: step 1/1. Involved in the TCA cycle. Catalyzes the stereospecific interconversion of fumarate to L-malate. The protein is Fumarate hydratase class II of Helicobacter pylori (strain J99 / ATCC 700824) (Campylobacter pylori J99).